Here is a 218-residue protein sequence, read N- to C-terminus: Glutathione S-transferase Mu 1 (218 aa).

The 87-residue stretch at 2 to 88 (PMTLGYWDIR…YIARKHNLCG (87 aa)) folds into the GST N-terminal domain. Residue 7–8 (YW) participates in glutathione binding. The residue at position 34 (threonine 34) is a Phosphothreonine. Residues 43-46 (RSQW), lysine 50, 59-60 (NL), and 72-73 (QS) contribute to the glutathione site. Positions 90–208 (TEEEKIRVDI…KSSRFLPKPL (119 aa)) constitute a GST C-terminal domain. Residue tyrosine 116 participates in substrate binding.

It belongs to the GST superfamily. Mu family. Homodimer.

It is found in the cytoplasm. The catalysed reaction is RX + glutathione = an S-substituted glutathione + a halide anion + H(+). It carries out the reaction prostaglandin A2 + glutathione = prostaglandin A2-S-(R)-glutathione. It catalyses the reaction prostaglandin J2 + glutathione = prostaglandin J2-S-(R)-glutathione. The enzyme catalyses prostaglandin J2 + glutathione = prostaglandin J2-S-(S)-glutathione. The catalysed reaction is prostaglandin A2 + glutathione = prostaglandin A2-S-(S)-glutathione. It carries out the reaction 11(S)-hydroxy-14(S),15(S)-epoxy-(5Z,8Z,12E)-eicosatrienoate + glutathione = (11S,15S)-dihydroxy-14(R)-S-glutathionyl-(5Z,8Z,12E)-eicosatrienoate. In terms of biological role, conjugation of reduced glutathione to a wide number of exogenous and endogenous hydrophobic electrophiles. Involved in the formation of glutathione conjugates of both prostaglandin A2 (PGA2) and prostaglandin J2 (PGJ2). Participates in the formation of novel hepoxilin regioisomers. In Macaca fascicularis (Crab-eating macaque), this protein is Glutathione S-transferase Mu 1 (GSTM1).